The sequence spans 170 residues: Large ribosomal subunit protein uL11 (170 aa).

It belongs to the universal ribosomal protein uL11 family. As to quaternary structure, part of the ribosomal stalk of the 50S ribosomal subunit. Interacts with L10 and the large rRNA to form the base of the stalk. L10 forms an elongated spine to which L12 dimers bind in a sequential fashion forming a multimeric L10(L12)X complex.

Forms part of the ribosomal stalk which helps the ribosome interact with GTP-bound translation factors. In Saccharolobus solfataricus (strain ATCC 35092 / DSM 1617 / JCM 11322 / P2) (Sulfolobus solfataricus), this protein is Large ribosomal subunit protein uL11.